The sequence spans 579 residues: Chromosomal replication initiator protein DnaA (579 aa).

Residues 1 to 71 form a domain I, interacts with DnaA modulators region; that stretch reads MQDFWQAAAA…TALACEYWET (71 aa). A domain II region spans residues 71 to 242; it reads TQVSVHFVLD…QQSDTVHERS (172 aa). Disordered regions lie at residues 131–196 and 212–240; these read AGAQ…SAAH and EASARSYRVPSPQPAAPAGAQQQSDTVHE. Residues 171–183 are compositionally biased toward low complexity; the sequence is SQSQQSAQGRGAA. The domain III, AAA+ region stretch occupies residues 243–459; that stretch reads RLNPILTFDN…GALRKILAFS (217 aa). The ATP site is built by glycine 287, glycine 289, lysine 290, and threonine 291. The tract at residues 460 to 579 is domain IV, binds dsDNA; that stretch reads NFHGKDITID…LHVLEQTLKG (120 aa).

This sequence belongs to the DnaA family. As to quaternary structure, oligomerizes as a right-handed, spiral filament on DNA at oriC.

It localises to the cytoplasm. In terms of biological role, plays an essential role in the initiation and regulation of chromosomal replication. ATP-DnaA binds to the origin of replication (oriC) to initiate formation of the DNA replication initiation complex once per cell cycle. Binds the DnaA box (a 9 base pair repeat at the origin) and separates the double-stranded (ds)DNA. Forms a right-handed helical filament on oriC DNA; dsDNA binds to the exterior of the filament while single-stranded (ss)DNA is stabiized in the filament's interior. The ATP-DnaA-oriC complex binds and stabilizes one strand of the AT-rich DNA unwinding element (DUE), permitting loading of DNA polymerase. After initiation quickly degrades to an ADP-DnaA complex that is not apt for DNA replication. Binds acidic phospholipids. The protein is Chromosomal replication initiator protein DnaA of Cupriavidus metallidurans (strain ATCC 43123 / DSM 2839 / NBRC 102507 / CH34) (Ralstonia metallidurans).